The chain runs to 468 residues: Aldehyde dehydrogenase family 3 member B1 (468 aa).

Methionine 1 carries the post-translational modification N-acetylmethionine. Position 188–193 (188–193 (GNTYVG)) interacts with NAD(+). Active-site residues include glutamate 210 and cysteine 244. S-palmitoyl cysteine attachment occurs at residues cysteine 462 and cysteine 463. A Cysteine methyl ester modification is found at cysteine 465. Cysteine 465 carries the S-geranylgeranyl cysteine lipid modification. A propeptide spans 466-468 (TLL) (removed in mature form).

The protein belongs to the aldehyde dehydrogenase family. Post-translationally, dually lipidated in the C-terminus; prenylation occurs prior to, and is a prerequisite for palmitoylation. It is also required for activity towards long-chain substrates.

It localises to the cell membrane. It carries out the reaction an aldehyde + NAD(+) + H2O = a carboxylate + NADH + 2 H(+). The catalysed reaction is a long-chain fatty aldehyde + NAD(+) + H2O = a long-chain fatty acid + NADH + 2 H(+). The enzyme catalyses a medium-chain fatty aldehyde + NAD(+) + H2O = a medium-chain fatty acid + NADH + 2 H(+). It catalyses the reaction octanal + NAD(+) + H2O = octanoate + NADH + 2 H(+). It carries out the reaction nonanal + NAD(+) + H2O = nonanoate + NADH + 2 H(+). The catalysed reaction is hexadecanoate + NADH + 2 H(+) = hexadecanal + NAD(+) + H2O. The enzyme catalyses (2E)-octenal + NAD(+) + H2O = (2E)-octenoate + NADH + 2 H(+). It catalyses the reaction (E)-non-2-enal + NAD(+) + H2O = (E)-non-2-enoate + NADH + 2 H(+). It carries out the reaction (E)-4-hydroxynon-2-enal + NAD(+) + H2O = (E)-4-hydroxynon-2-enoate + NADH + 2 H(+). The catalysed reaction is (2E)-hexadecenal + NAD(+) + H2O = (E)-hexadec-2-enoate + NADH + 2 H(+). The enzyme catalyses benzaldehyde + NAD(+) + H2O = benzoate + NADH + 2 H(+). It catalyses the reaction an aldehyde + NADP(+) + H2O = a carboxylate + NADPH + 2 H(+). It carries out the reaction a medium-chain fatty aldehyde + NADP(+) + H2O = a medium-chain fatty acid + NADPH + 2 H(+). The catalysed reaction is hexanal + NADP(+) + H2O = hexanoate + NADPH + 2 H(+). The enzyme catalyses octanal + NADP(+) + H2O = octanoate + NADPH + 2 H(+). It catalyses the reaction nonanal + NADP(+) + H2O = nonanoate + NADPH + 2 H(+). It carries out the reaction (2E)-octenal + NADP(+) + H2O = (2E)-octenoate + NADPH + 2 H(+). The catalysed reaction is (E)-non-2-enal + NADP(+) + H2O = (E)-non-2-enoate + NADPH + 2 H(+). The enzyme catalyses (E)-4-hydroxynon-2-enal + NADP(+) + H2O = (E)-4-hydroxynon-2-enoate + NADPH + 2 H(+). It catalyses the reaction benzaldehyde + NADP(+) + H2O = benzoate + NADPH + 2 H(+). It functions in the pathway alcohol metabolism; ethanol degradation; acetate from ethanol: step 2/2. Oxidizes medium and long chain saturated and unsaturated fatty aldehydes generated in the plasma membrane into non-toxic fatty acids. May have a protective role against the cytotoxicity induced by lipid peroxidation. Short-chain fatty aldehydes are not good substrates. Can use both NADP(+) and NAD(+) as electron acceptor in vitro, however in vivo preference will depend on their tissue levels. Low activity towards acetaldehyde and 3,4-dihydroxyphenylacetaldehyde. Able to metabolize aromatic aldehydes such as benzaldehyde to their acid form. This chain is Aldehyde dehydrogenase family 3 member B1 (Aldh3b1), found in Rattus norvegicus (Rat).